The following is a 396-amino-acid chain: Alanine racemase (396 aa).

Catalysis depends on lysine 46, which acts as the Proton acceptor; specific for D-alanine. Position 46 is an N6-(pyridoxal phosphate)lysine (lysine 46). A substrate-binding site is contributed by arginine 145. Tyrosine 280 functions as the Proton acceptor; specific for L-alanine in the catalytic mechanism. Methionine 328 lines the substrate pocket.

This sequence belongs to the alanine racemase family. It depends on pyridoxal 5'-phosphate as a cofactor.

It catalyses the reaction L-alanine = D-alanine. It functions in the pathway amino-acid biosynthesis; D-alanine biosynthesis; D-alanine from L-alanine: step 1/1. In terms of biological role, catalyzes the interconversion of L-alanine and D-alanine. May also act on other amino acids. This is Alanine racemase (alr) from Brucella abortus (strain 2308).